We begin with the raw amino-acid sequence, 146 residues long: Hemoglobin subunit beta-2 (146 aa).

The 145-residue stretch at 2 to 146 (HWTAEEKQLI…VAHALARRYH (145 aa)) folds into the Globin domain. The heme b site is built by His-63 and His-92.

Belongs to the globin family. In terms of assembly, heterotetramer of two alpha chains and two beta chains. Red blood cells.

In terms of biological role, involved in oxygen transport from the lung to the various peripheral tissues. The sequence is that of Hemoglobin subunit beta-2 from Iguana iguana (Common iguana).